Here is a 271-residue protein sequence, read N- to C-terminus: Ferric vulnibactin reductase VuuB (271 aa).

The FAD-binding FR-type domain occupies 8–131; sequence VYPMLLDFVR…IGPAGPDPLI (124 aa).

This sequence belongs to the SIP oxidoreductase family. As to quaternary structure, monomer. FAD serves as cofactor.

The protein localises to the cytoplasm. The catalysed reaction is 2 a Fe(II)-siderophore + NAD(+) + H(+) = 2 a Fe(III)-siderophore + NADH. In terms of biological role, ferric-siderophore reductase involved in iron removal from the siderophores after their transport into the cell. Acts as a major ferric-vulnibactin reductase catalyzing the reduction of Fe(3+)-vulnibactin, a catecholate siderophore synthesized by V.vulnificus. Catalyzes reduction of Fe(3+)-aerobactin, a citrate-hydroxamate siderophore produced by other bacteria, in the absence of IutB. Catalyzes reduction of Fe(3+)-vibriobactin in vitro. No activity with ferrioxamine B or Fe(3+)-enterobactin. Catalyzes reduction of ferric chelating compounds Fe(3+)-nitrilotriacetic acid (NTA), Fe(3+)-citrate and Fe(3+)-EDTA as well as non-complexed FeCl3 in the presence of NADH as its electron donor and FAD as its cofactor in vitro. Highest activity with Fe(3+)-NTA as electron acceptor. In Vibrio vulnificus, this protein is Ferric vulnibactin reductase VuuB.